The primary structure comprises 540 residues: Bifunctional purine biosynthesis protein PurH (540 aa).

Residues 1 to 144 enclose the MGS-like domain; it reads MKRALISVYD…KNYQDVGVVV (144 aa). Residues 204–224 are disordered; sequence ETAPERPIGADPGPQKPAAPS.

Belongs to the PurH family.

It catalyses the reaction (6R)-10-formyltetrahydrofolate + 5-amino-1-(5-phospho-beta-D-ribosyl)imidazole-4-carboxamide = 5-formamido-1-(5-phospho-D-ribosyl)imidazole-4-carboxamide + (6S)-5,6,7,8-tetrahydrofolate. It carries out the reaction IMP + H2O = 5-formamido-1-(5-phospho-D-ribosyl)imidazole-4-carboxamide. It participates in purine metabolism; IMP biosynthesis via de novo pathway; 5-formamido-1-(5-phospho-D-ribosyl)imidazole-4-carboxamide from 5-amino-1-(5-phospho-D-ribosyl)imidazole-4-carboxamide (10-formyl THF route): step 1/1. The protein operates within purine metabolism; IMP biosynthesis via de novo pathway; IMP from 5-formamido-1-(5-phospho-D-ribosyl)imidazole-4-carboxamide: step 1/1. The protein is Bifunctional purine biosynthesis protein PurH of Symbiobacterium thermophilum (strain DSM 24528 / JCM 14929 / IAM 14863 / T).